A 194-amino-acid polypeptide reads, in one-letter code: Adenylate kinase (194 aa).

Residue Gly-10–Thr-15 participates in ATP binding. The NMP stretch occupies residues Ser-30–Val-59. Residues Thr-31, Arg-36, Gln-57–Val-59, Gly-85–Arg-88, and Gln-92 contribute to the AMP site. The interval Ser-126 to Asp-142 is LID. Arg-127 contacts ATP. AMP-binding residues include Arg-139 and Arg-150. Ala-178 lines the ATP pocket.

It belongs to the adenylate kinase family. As to quaternary structure, monomer.

It is found in the cytoplasm. The catalysed reaction is AMP + ATP = 2 ADP. It participates in purine metabolism; AMP biosynthesis via salvage pathway; AMP from ADP: step 1/1. In terms of biological role, catalyzes the reversible transfer of the terminal phosphate group between ATP and AMP. Plays an important role in cellular energy homeostasis and in adenine nucleotide metabolism. The sequence is that of Adenylate kinase from Brucella canis (strain ATCC 23365 / NCTC 10854 / RM-666).